Consider the following 166-residue polypeptide: Prorelaxin H2 (166 aa).

The N-terminal stretch at 1-5 (SRAVA) is a signal peptide. Cystine bridges form between Cys16–Cys153, Cys28–Cys166, and Cys152–Cys157. The propeptide at 37-138 (SLSQEDAPQT…LKYLGLDTHS (102 aa)) is connecting peptide.

This sequence belongs to the insulin family. As to quaternary structure, heterodimer of a B chain and an A chain linked by two disulfide bonds. Expressed in the corpus luteum of pregnancy and in the placenta.

The protein resides in the secreted. Functionally, relaxin is an ovarian hormone that acts with estrogen to produce dilatation of the birth canal in many mammals. May be involved in remodeling of connective tissues during pregnancy, promoting growth of pubic ligaments and ripening of the cervix. The protein is Prorelaxin H2 (RNL2) of Pan troglodytes (Chimpanzee).